A 299-amino-acid chain; its full sequence is Sulfate adenylyltransferase subunit 2 (299 aa).

The disordered stretch occupies residues 276–299 (EREGRVIDHDSAGSMEKKKREGYF).

The protein belongs to the PAPS reductase family. CysD subfamily. In terms of assembly, heterodimer composed of CysD, the smaller subunit, and CysN.

The enzyme catalyses sulfate + ATP + H(+) = adenosine 5'-phosphosulfate + diphosphate. The protein operates within sulfur metabolism; hydrogen sulfide biosynthesis; sulfite from sulfate: step 1/3. In terms of biological role, with CysN forms the ATP sulfurylase (ATPS) that catalyzes the adenylation of sulfate producing adenosine 5'-phosphosulfate (APS) and diphosphate, the first enzymatic step in sulfur assimilation pathway. APS synthesis involves the formation of a high-energy phosphoric-sulfuric acid anhydride bond driven by GTP hydrolysis by CysN coupled to ATP hydrolysis by CysD. The protein is Sulfate adenylyltransferase subunit 2 of Pseudoalteromonas translucida (strain TAC 125).